The primary structure comprises 476 residues: Adenosylhomocysteinase (476 aa).

Substrate-binding residues include T62, D141, and E201. 202 to 204 contacts NAD(+); sequence TTT. Residues K231 and D235 each contribute to the substrate site. Residues N236, 265–270, E288, N323, 344–346, and N389 contribute to the NAD(+) site; these read GYGDVG and IGH.

The protein belongs to the adenosylhomocysteinase family. NAD(+) is required as a cofactor.

Its subcellular location is the cytoplasm. It carries out the reaction S-adenosyl-L-homocysteine + H2O = L-homocysteine + adenosine. The protein operates within amino-acid biosynthesis; L-homocysteine biosynthesis; L-homocysteine from S-adenosyl-L-homocysteine: step 1/1. May play a key role in the regulation of the intracellular concentration of adenosylhomocysteine. In Myxococcus xanthus (strain DK1622), this protein is Adenosylhomocysteinase.